The chain runs to 2133 residues: Coagulation factor VIII (2133 aa).

Positions 1 to 19 (MQLELSTCVFLCLLPLGFS) are cleaved as a signal peptide. Plastocyanin-like domains are found at residues 20–199 (AIRR…LLVC), 207–357 (ERTQ…QLRR), 399–573 (KTWV…LLIC), and 583–730 (NQMM…VYSC). F5/8 type A domains follow at residues 20 to 357 (AIRR…QLRR) and 399 to 730 (KTWV…VYSC). Cys173 and Cys199 are oxidised to a cystine. Asn233 and Asn259 each carry an N-linked (GlcNAc...) asparagine glycan. A disulfide bridge links Cys547 with Cys573. Residue Asn601 is glycosylated (N-linked (GlcNAc...) asparagine). 3 positions are modified to sulfotyrosine: Tyr737, Tyr738, and Tyr742. Disordered stretches follow at residues 760–790 (SFAQ…LDPQ) and 804–914 (PSGD…PHPQ). Residues 760 to 1599 (SFAQNSRPPS…LISYPDDQEQ (840 aa)) are b. Positions 761–780 (FAQNSRPPSASQKQFQTITS) are enriched in polar residues. Composition is skewed to basic and acidic residues over residues 853–862 (LRPELHHSAE) and 868–878 (EPEKELKKLDS). The span at 879 to 888 (KMSSSSDLLK) shows a compositional bias: low complexity. Residues 889–900 (TSPTIPSDTLSA) are compositionally biased toward polar residues. 3 N-linked (GlcNAc...) asparagine glycosylation sites follow: Asn929, Asn985, and Asn1025. The segment at 1042 to 1078 (LGKNPLSSERGPSPELLTSSGSGKSVKGQSSGQGRIR) is disordered. Low complexity predominate over residues 1060 to 1075 (SSGSGKSVKGQSSGQG). N-linked (GlcNAc...) asparagine glycosylation is present at Asn1111. The tract at residues 1160-1179 (PSVEGFDGGSHAPVPQDSRS) is disordered. N-linked (GlcNAc...) asparagine glycosylation is found at Asn1181, Asn1208, Asn1245, Asn1265, and Asn1335. The tract at residues 1200–1221 (EAPLEAPGNRTGPGPRSAVPRR) is disordered. 2 disordered regions span residues 1358-1391 (LNKV…KSTA) and 1406-1441 (ESNH…APKP). Residues 1378–1387 (KEWESLEKSP) are compositionally biased toward basic and acidic residues. N-linked (GlcNAc...) asparagine glycans are attached at residues Asn1408 and Asn1611. Plastocyanin-like domains lie at 1495-1659 (RTRH…LLIC) and 1669-1822 (GRQV…SKEC). The 328-residue stretch at 1495–1822 (RTRHYFIAAV…TTFLVYSKEC (328 aa)) folds into the F5/8 type A 3 domain. Intrachain disulfides connect Cys1633–Cys1659, Cys1822–Cys1970, and Cys1975–Cys2127. 2 consecutive F5/8 type C domains span residues 1822-1970 (CQAP…LMGC) and 1975-2127 (CSMP…VLGC). An N-linked (GlcNAc...) asparagine glycan is attached at Asn1919.

The protein belongs to the multicopper oxidase family. In terms of assembly, interacts with vWF. vWF binding is essential for the stabilization of F8 in circulation. Post-translationally, proteolytically cleaved by cathepsin CTSG to produce a partially activated form.

It localises to the secreted. The protein resides in the extracellular space. Its function is as follows. Factor VIII, along with calcium and phospholipid, acts as a cofactor for factor IXa when it converts factor X to the activated form, factor Xa. The chain is Coagulation factor VIII (F8) from Sus scrofa (Pig).